A 485-amino-acid chain; its full sequence is Ribulose bisphosphate carboxylase large chain (485 aa).

Substrate-binding residues include asparagine 124 and threonine 174. The Proton acceptor role is filled by lysine 176. Lysine 178 is a binding site for substrate. Positions 202, 204, and 205 each coordinate Mg(2+). At lysine 202 the chain carries N6-carboxylysine. The Proton acceptor role is filled by histidine 294. Substrate-binding residues include arginine 295, histidine 327, and serine 379.

The protein belongs to the RuBisCO large chain family. Type I subfamily. Heterohexadecamer of 8 large chains and 8 small chains. Mg(2+) serves as cofactor.

It catalyses the reaction 2 (2R)-3-phosphoglycerate + 2 H(+) = D-ribulose 1,5-bisphosphate + CO2 + H2O. The catalysed reaction is D-ribulose 1,5-bisphosphate + O2 = 2-phosphoglycolate + (2R)-3-phosphoglycerate + 2 H(+). RuBisCO catalyzes two reactions: the carboxylation of D-ribulose 1,5-bisphosphate, the primary event in carbon dioxide fixation, as well as the oxidative fragmentation of the pentose substrate. Both reactions occur simultaneously and in competition at the same active site. In Rhodopseudomonas palustris (strain ATCC BAA-98 / CGA009), this protein is Ribulose bisphosphate carboxylase large chain.